The chain runs to 103 residues: Large ribosomal subunit protein bL21 (103 aa).

This sequence belongs to the bacterial ribosomal protein bL21 family. As to quaternary structure, part of the 50S ribosomal subunit. Contacts protein L20.

This protein binds to 23S rRNA in the presence of protein L20. This chain is Large ribosomal subunit protein bL21, found in Paraburkholderia phymatum (strain DSM 17167 / CIP 108236 / LMG 21445 / STM815) (Burkholderia phymatum).